A 624-amino-acid chain; its full sequence is DNA-directed RNA polymerase III subunit rpc-3 (624 aa).

2 disordered regions span residues 229-260 and 373-418; these read KRKL…EEDL and LAPK…ARMS. Over residues 385–403 the composition is skewed to acidic residues; the sequence is DDSDDDEEDGDYSDSDEEM. A leucine-zipper region spans residues 551–572; it reads CYATMVHCLQVLEVRRQKDKDV.

It belongs to the RNA polymerase beta chain family. Component of the RNA polymerase III (Pol III) complex consisting of 17 subunits.

The protein localises to the nucleus. Functionally, DNA-dependent RNA polymerase catalyzes the transcription of DNA into RNA using the four ribonucleoside triphosphates as substrates. Specific core component of RNA polymerase III which synthesizes small RNAs, such as 5S rRNA and tRNAs. In Neurospora crassa (strain ATCC 24698 / 74-OR23-1A / CBS 708.71 / DSM 1257 / FGSC 987), this protein is DNA-directed RNA polymerase III subunit rpc-3 (rpc-82).